A 351-amino-acid polypeptide reads, in one-letter code: Dihydroorotate dehydrogenase (quinone) (351 aa).

FMN contacts are provided by residues 67–71 (AGFDK) and threonine 91. Lysine 71 is a binding site for substrate. Residue 116–120 (NAMGF) coordinates substrate. FMN-binding residues include asparagine 145 and asparagine 178. Asparagine 178 contacts substrate. The Nucleophile role is filled by serine 181. Residue asparagine 183 coordinates substrate. FMN-binding residues include lysine 214 and threonine 242. 243–244 (NT) is a binding site for substrate. Residues glycine 262, glycine 291, and 312-313 (YS) each bind FMN.

Belongs to the dihydroorotate dehydrogenase family. Type 2 subfamily. In terms of assembly, monomer. It depends on FMN as a cofactor.

The protein resides in the cell membrane. It catalyses the reaction (S)-dihydroorotate + a quinone = orotate + a quinol. Its pathway is pyrimidine metabolism; UMP biosynthesis via de novo pathway; orotate from (S)-dihydroorotate (quinone route): step 1/1. Its function is as follows. Catalyzes the conversion of dihydroorotate to orotate with quinone as electron acceptor. The chain is Dihydroorotate dehydrogenase (quinone) from Helicobacter pylori (strain HPAG1).